A 297-amino-acid chain; its full sequence is Nicotinate-nucleotide pyrophosphorylase [carboxylating] (297 aa).

Positions 8–12 (LLLPP) are important for hexamer formation. Quinolinate is bound by residues arginine 102, 138–139 (RK), 160–161 (HR), lysine 171, glutamate 201, aspartate 222, 248–250 (SGG), and glycine 270.

It belongs to the NadC/ModD family. As to quaternary structure, hexamer formed by 3 homodimers.

The enzyme catalyses nicotinate beta-D-ribonucleotide + CO2 + diphosphate = quinolinate + 5-phospho-alpha-D-ribose 1-diphosphate + 2 H(+). It participates in cofactor biosynthesis; NAD(+) biosynthesis; nicotinate D-ribonucleotide from quinolinate: step 1/1. Activity toward QA is slightly repressed by phosphoribosylpyrophosphate (PRPP) in both a competitive and a non-competitive manner. Competitively inhibited by phthalic acid (PHT). In terms of biological role, involved in the catabolism of quinolinic acid (QA). This Homo sapiens (Human) protein is Nicotinate-nucleotide pyrophosphorylase [carboxylating] (QPRT).